Here is a 540-residue protein sequence, read N- to C-terminus: CTP synthase (540 aa).

An amidoligase domain region spans residues 1-265; it reads MVRFIFITGG…DNKVLKFFNL (265 aa). Residue serine 13 participates in CTP binding. Serine 13 provides a ligand contact to UTP. ATP-binding positions include 14-19 and aspartate 71; that span reads SLGKGL. Residues aspartate 71 and glutamate 139 each contribute to the Mg(2+) site. Residues 146–148, 186–191, and lysine 222 each bind CTP; these read DIE and KTKPTQ. Residues 186-191 and lysine 222 contribute to the UTP site; that span reads KTKPTQ. The Glutamine amidotransferase type-1 domain maps to 290 to 539; sequence RIAIIAKYHK…VEAAIKYNKN (250 aa). Glycine 352 contributes to the L-glutamine binding site. Cysteine 379 functions as the Nucleophile; for glutamine hydrolysis in the catalytic mechanism. L-glutamine-binding positions include 380–383, glutamate 403, and arginine 467; that span reads LGMQ. Residues histidine 512 and glutamate 514 contribute to the active site.

It belongs to the CTP synthase family. In terms of assembly, homotetramer.

The catalysed reaction is UTP + L-glutamine + ATP + H2O = CTP + L-glutamate + ADP + phosphate + 2 H(+). The enzyme catalyses L-glutamine + H2O = L-glutamate + NH4(+). It carries out the reaction UTP + NH4(+) + ATP = CTP + ADP + phosphate + 2 H(+). It functions in the pathway pyrimidine metabolism; CTP biosynthesis via de novo pathway; CTP from UDP: step 2/2. Its activity is regulated as follows. Allosterically activated by GTP, when glutamine is the substrate; GTP has no effect on the reaction when ammonia is the substrate. The allosteric effector GTP functions by stabilizing the protein conformation that binds the tetrahedral intermediate(s) formed during glutamine hydrolysis. Inhibited by the product CTP, via allosteric rather than competitive inhibition. Catalyzes the ATP-dependent amination of UTP to CTP with either L-glutamine or ammonia as the source of nitrogen. Regulates intracellular CTP levels through interactions with the four ribonucleotide triphosphates. In Rickettsia bellii (strain RML369-C), this protein is CTP synthase.